The chain runs to 80 residues: MQIAQIFNMNLSELVDENRGIIFLLNENGNNTSTNYYGNNDSLIIEIEKLKLTLFHKNELLEQKEKELETLRKMISLLEK.

This is an uncharacterized protein from Haemophilus influenzae (strain ATCC 51907 / DSM 11121 / KW20 / Rd).